Consider the following 131-residue polypeptide: GATA zinc finger domain-containing protein 2 (131 aa).

Residues 21–55 (STATDATSADGAASETDAASATDTTSATDPTSATD) show a composition bias toward low complexity. The disordered stretch occupies residues 21 to 85 (STATDATSAD…RGRPYISTPP (65 aa)). Residues 57–74 (IATTNTTGITSSGPTTNG) are compositionally biased toward polar residues. The GATA-type zinc-finger motif lies at 88–115 (CYDCGRTRSPYWRKGTYNGQVVHLCNAC).

The polypeptide is GATA zinc finger domain-containing protein 2 (comH) (Dictyostelium discoideum (Social amoeba)).